A 486-amino-acid chain; its full sequence is UDP-N-acetylmuramate--L-alanine ligase (486 aa).

An ATP-binding site is contributed by 132–138 (GTHGKTT).

Belongs to the MurCDEF family.

Its subcellular location is the cytoplasm. The catalysed reaction is UDP-N-acetyl-alpha-D-muramate + L-alanine + ATP = UDP-N-acetyl-alpha-D-muramoyl-L-alanine + ADP + phosphate + H(+). Its pathway is cell wall biogenesis; peptidoglycan biosynthesis. Cell wall formation. The sequence is that of UDP-N-acetylmuramate--L-alanine ligase from Halorhodospira halophila (strain DSM 244 / SL1) (Ectothiorhodospira halophila (strain DSM 244 / SL1)).